The primary structure comprises 548 residues: Eukaryotic translation initiation factor 3 subunit D (548 aa).

The residue at position 53 (K53) is an N6-acetyllysine. S161 is subject to Phosphoserine. The segment at 285–299 is RNA gate; it reads DFDLPTVSETANEPP. 2 disordered regions span residues 288 to 309 and 523 to 548; these read LPTV…FNSP and PDGT…EEET. Residues 291–309 show a composition bias toward polar residues; the sequence is VSETANEPPQDEGNSFNSP. A phosphoserine mark is found at S528 and S529. The segment covering 529 to 548 has biased composition (acidic residues); sequence SDEDEEEEEEEEEEEEEEET.

Belongs to the eIF-3 subunit D family. In terms of assembly, component of the eukaryotic translation initiation factor 3 (eIF-3) complex, which is composed of 13 subunits: EIF3A, EIF3B, EIF3C, EIF3D, EIF3E, EIF3F, EIF3G, EIF3H, EIF3I, EIF3J, EIF3K, EIF3L and EIF3M. The eIF-3 complex appears to include 3 stable modules: module A is composed of EIF3A, EIF3B, EIF3G and EIF3I; module B is composed of EIF3F, EIF3H, and EIF3M; and module C is composed of EIF3C, EIF3D, EIF3E, EIF3K and EIF3L. EIF3C of module C binds EIF3B of module A and EIF3H of module B, thereby linking the three modules. EIF3J is a labile subunit that binds to the eIF-3 complex via EIF3B. The eIF-3 complex interacts with RPS6KB1 under conditions of nutrient depletion. Mitogenic stimulation leads to binding and activation of a complex composed of MTOR and RPTOR, leading to phosphorylation and release of RPS6KB1 and binding of EIF4B to eIF-3.

The protein resides in the cytoplasm. Functionally, mRNA cap-binding component of the eukaryotic translation initiation factor 3 (eIF-3) complex, a complex required for several steps in the initiation of protein synthesis of a specialized repertoire of mRNAs. The eIF-3 complex associates with the 40S ribosome and facilitates the recruitment of eIF-1, eIF-1A, eIF-2:GTP:methionyl-tRNAi and eIF-5 to form the 43S pre-initiation complex (43S PIC). The eIF-3 complex stimulates mRNA recruitment to the 43S PIC and scanning of the mRNA for AUG recognition. The eIF-3 complex is also required for disassembly and recycling of post-termination ribosomal complexes and subsequently prevents premature joining of the 40S and 60S ribosomal subunits prior to initiation. The eIF-3 complex specifically targets and initiates translation of a subset of mRNAs involved in cell proliferation, including cell cycling, differentiation and apoptosis, and uses different modes of RNA stem-loop binding to exert either translational activation or repression. In the eIF-3 complex, EIF3D specifically recognizes and binds the 7-methylguanosine cap of a subset of mRNAs. The protein is Eukaryotic translation initiation factor 3 subunit D of Pongo abelii (Sumatran orangutan).